Consider the following 249-residue polypeptide: Phosphomannomutase 2 (249 aa).

Aspartate 12 functions as the Nucleophile in the catalytic mechanism. Residues aspartate 12 and aspartate 14 each coordinate Mg(2+). Aspartate 14 functions as the Proton donor/acceptor in the catalytic mechanism. Alpha-D-mannose 1-phosphate is bound by residues arginine 21, arginine 123, arginine 134, arginine 141, serine 179, and aspartate 181. Aspartate 209 serves as a coordination point for Mg(2+).

This sequence belongs to the eukaryotic PMM family. Homodimer.

It localises to the cytoplasm. It carries out the reaction alpha-D-mannose 1-phosphate = D-mannose 6-phosphate. The protein operates within nucleotide-sugar biosynthesis; GDP-alpha-D-mannose biosynthesis; alpha-D-mannose 1-phosphate from D-fructose 6-phosphate: step 2/2. Functionally, involved in the synthesis of the GDP-mannose and dolichol-phosphate-mannose required for a number of critical mannosyl transfer reactions. This chain is Phosphomannomutase 2 (pmmB), found in Dictyostelium discoideum (Social amoeba).